The sequence spans 268 residues: Ribosomal RNA small subunit methyltransferase A (268 aa).

6 residues coordinate S-adenosyl-L-methionine: Asn-12, Leu-14, Gly-38, Glu-59, Asp-82, and Asn-107.

Belongs to the class I-like SAM-binding methyltransferase superfamily. rRNA adenine N(6)-methyltransferase family. RsmA subfamily.

It localises to the cytoplasm. The catalysed reaction is adenosine(1518)/adenosine(1519) in 16S rRNA + 4 S-adenosyl-L-methionine = N(6)-dimethyladenosine(1518)/N(6)-dimethyladenosine(1519) in 16S rRNA + 4 S-adenosyl-L-homocysteine + 4 H(+). Functionally, specifically dimethylates two adjacent adenosines (A1518 and A1519) in the loop of a conserved hairpin near the 3'-end of 16S rRNA in the 30S particle. May play a critical role in biogenesis of 30S subunits. The polypeptide is Ribosomal RNA small subunit methyltransferase A (Aster yellows witches'-broom phytoplasma (strain AYWB)).